A 61-amino-acid chain; its full sequence is Large ribosomal subunit protein bL28 (61 aa).

The segment at 1–26 (MAKDFLNGKRTHFGNKRSHALNSSRR) is disordered. Basic residues predominate over residues 9–19 (KRTHFGNKRSH).

The protein belongs to the bacterial ribosomal protein bL28 family.

The sequence is that of Large ribosomal subunit protein bL28 from Levilactobacillus brevis (strain ATCC 367 / BCRC 12310 / CIP 105137 / JCM 1170 / LMG 11437 / NCIMB 947 / NCTC 947) (Lactobacillus brevis).